A 320-amino-acid chain; its full sequence is Cytochrome c biogenesis protein CcsA (320 aa).

8 helical membrane-spanning segments follow: residues 14-34 (SFFL…YINI), 37-57 (ITIL…TFLL), 68-88 (LSNL…IHLI), 97-117 (WLGI…TLSL), 143-163 (MMLS…ILII), 228-248 (VISL…VWAN), 263-283 (WALI…IKGW), and 289-309 (AIIA…VNLL).

It belongs to the CcmF/CycK/Ccl1/NrfE/CcsA family. May interact with Ccs1.

It is found in the plastid. Its subcellular location is the chloroplast thylakoid membrane. Functionally, required during biogenesis of c-type cytochromes (cytochrome c6 and cytochrome f) at the step of heme attachment. The chain is Cytochrome c biogenesis protein CcsA from Marchantia polymorpha (Common liverwort).